A 406-amino-acid polypeptide reads, in one-letter code: Probable 26S proteasome regulatory subunit 10B (406 aa).

191-198 (GPPGTGKT) is an ATP binding site.

Belongs to the AAA ATPase family.

Its subcellular location is the cytoplasm. It is found in the nucleus. In terms of biological role, the 26S proteasome is involved in the ATP-dependent degradation of ubiquitinated proteins. The regulatory (or ATPase) complex confers ATP dependency and substrate specificity to the 26S complex. This chain is Probable 26S proteasome regulatory subunit 10B (rpt-4), found in Caenorhabditis elegans.